Here is a 331-residue protein sequence, read N- to C-terminus: Glycerol-3-phosphate dehydrogenase [NAD(P)+] (331 aa).

Positions 14, 34, and 107 each coordinate NADPH. Sn-glycerol 3-phosphate contacts are provided by lysine 107, glycine 135, and serine 137. Alanine 139 serves as a coordination point for NADPH. Sn-glycerol 3-phosphate-binding residues include lysine 190, aspartate 243, serine 253, arginine 254, and asparagine 255. Lysine 190 acts as the Proton acceptor in catalysis. Arginine 254 is a binding site for NADPH. The NADPH site is built by valine 278 and glutamate 280.

It belongs to the NAD-dependent glycerol-3-phosphate dehydrogenase family.

The protein localises to the cytoplasm. It catalyses the reaction sn-glycerol 3-phosphate + NAD(+) = dihydroxyacetone phosphate + NADH + H(+). The catalysed reaction is sn-glycerol 3-phosphate + NADP(+) = dihydroxyacetone phosphate + NADPH + H(+). It functions in the pathway membrane lipid metabolism; glycerophospholipid metabolism. Its function is as follows. Catalyzes the reduction of the glycolytic intermediate dihydroxyacetone phosphate (DHAP) to sn-glycerol 3-phosphate (G3P), the key precursor for phospholipid synthesis. This chain is Glycerol-3-phosphate dehydrogenase [NAD(P)+], found in Caulobacter vibrioides (strain ATCC 19089 / CIP 103742 / CB 15) (Caulobacter crescentus).